The following is a 189-amino-acid chain: FAS1 domain-containing protein mug57 (189 aa).

Positions 1 to 24 (MMKLFCLNIFRFLYTTSFISAVLS) are cleaved as a signal peptide. Residues 37–182 (EPRLFELLAE…GEMWVLNATL (146 aa)) enclose the FAS1 domain.

The protein localises to the cytoplasm. The protein resides in the nucleus. It localises to the membrane. Its function is as follows. Has a role in sporulation. In Schizosaccharomyces pombe (strain 972 / ATCC 24843) (Fission yeast), this protein is FAS1 domain-containing protein mug57 (mug57).